Consider the following 495-residue polypeptide: Cytochrome P450 Tp4149 (495 aa).

2 consecutive transmembrane segments (helical) span residues 4–24 (ILSL…MFFI) and 208–228 (YLSM…SWVD). Asparagine 419 carries N-linked (GlcNAc...) asparagine glycosylation. Residue cysteine 437 coordinates heme.

Belongs to the cytochrome P450 family. Heme is required as a cofactor.

It is found in the membrane. It participates in secondary metabolite biosynthesis; terpenoid biosynthesis. Functionally, probably involved in the biosynthesis of germacrene-derived sesquiterpene lactones. The protein is Cytochrome P450 Tp4149 of Tanacetum parthenium (Feverfew).